We begin with the raw amino-acid sequence, 92 residues long: Probable Fe(2+)-trafficking protein (92 aa).

The protein belongs to the Fe(2+)-trafficking protein family.

Could be a mediator in iron transactions between iron acquisition and iron-requiring processes, such as synthesis and/or repair of Fe-S clusters in biosynthetic enzymes. This chain is Probable Fe(2+)-trafficking protein, found in Shewanella pealeana (strain ATCC 700345 / ANG-SQ1).